The chain runs to 186 residues: DNA damage up-regulated protein (186 aa).

Residues 147 to 166 (ATENGEGCRPARDPASSPSS) form a disordered region.

Interacts with DNA damage response proteins ATR, H2AX, PCNA, RAD18 and RAD51C. Forms a complex with H2AX and RAD18 following DDUP phosphorylation. Phosphorylated in an ATR-dependent manner; phosphorylation is required for interaction with H2AX and RAD18 and for DDUP-mediated DNA damage repair.

The protein resides in the nucleus. Its subcellular location is the chromosome. Promotes DNA damage repair through both homologous recombination repair (HRR) and post-replication repair (PRR) mechanisms. Enhances the retention of DNA damage response protein RAD18 at sites of DNA damage. This allows for HRR via association of RAD18 with RAD51C and for PRR via RAD18-mediated promotion of PCNA monoubiquitination. This chain is DNA damage up-regulated protein, found in Homo sapiens (Human).